We begin with the raw amino-acid sequence, 329 residues long: Acetyl-coenzyme A carboxylase carboxyl transferase subunit alpha (329 aa).

In terms of domain architecture, CoA carboxyltransferase C-terminal spans 40 to 294 (QLETLAARRR…KNALEKHLSE (255 aa)).

This sequence belongs to the AccA family. In terms of assembly, acetyl-CoA carboxylase is a heterohexamer composed of biotin carboxyl carrier protein (AccB), biotin carboxylase (AccC) and two subunits each of ACCase subunit alpha (AccA) and ACCase subunit beta (AccD).

Its subcellular location is the cytoplasm. It carries out the reaction N(6)-carboxybiotinyl-L-lysyl-[protein] + acetyl-CoA = N(6)-biotinyl-L-lysyl-[protein] + malonyl-CoA. Its pathway is lipid metabolism; malonyl-CoA biosynthesis; malonyl-CoA from acetyl-CoA: step 1/1. Functionally, component of the acetyl coenzyme A carboxylase (ACC) complex. First, biotin carboxylase catalyzes the carboxylation of biotin on its carrier protein (BCCP) and then the CO(2) group is transferred by the carboxyltransferase to acetyl-CoA to form malonyl-CoA. The sequence is that of Acetyl-coenzyme A carboxylase carboxyl transferase subunit alpha from Prochlorococcus marinus (strain NATL2A).